Here is a 758-residue protein sequence, read N- to C-terminus: Spastin (758 aa).

The interval 1–103 is disordered; sequence MVRTKNQSSS…SPRSGHHHSY (103 aa). Over 1–121 the chain is Cytoplasmic; the sequence is MVRTKNQSSS…KQNLYVVSFP (121 aa). Positions 1–159 are interaction with atl; it reads MVRTKNQSSS…VIYRPHRRDC (159 aa). A required for localization to punctate cytoplasmic foci region spans residues 1-210; sequence MVRTKNQSSS…RPIQPLEMAA (210 aa). Composition is skewed to low complexity over residues 8–28, 43–58, 66–76, and 85–95; these read SSSS…SSGA, RSSS…AGGS, SSNRRSPGSSP, and TDDLTPTTCSP. The segment at residues 122–142 is an intramembrane region (helical); the sequence is IIFLFNVLRSLIYQLFCIFRY. The Cytoplasmic segment spans residues 143–758; sequence LYGASTKVIY…WSQDYGDITI (616 aa). Polar residues-rich tracts occupy residues 169-180 and 189-198; these read SKEQQQSLNHPS and QEQQLSNQPQ. Residues 169-202 form a disordered region; the sequence is SKEQQQSLNHPSELNREGDGQEQQLSNQPQRFRP. The interval 208 to 758 is sufficient for interaction with microtubules and microtubule severing; it reads MAANRPGGGY…WSQDYGDITI (551 aa). Residues 233-308 enclose the MIT domain; sequence HRRAFEYISK…SMARDRLHFL (76 aa). Residues 353-454 are disordered; sequence RVRSSGYGPK…GPSGSGASTP (102 aa). Composition is skewed to polar residues over residues 390–406 and 425–454; these read NKSQ…TSVG and QFSS…ASTP. A Phosphothreonine modification is found at Thr-439. The interval 443-455 is required for interaction with microtubules; it reads NNGPSGSGASTPV. 523-530 contributes to the ATP binding site; it reads GPPGNGKT.

This sequence belongs to the AAA ATPase family. Spastin subfamily. As to quaternary structure, homohexamer. The homohexamer is stabilized by ATP-binding. The homohexamer may adopt a ring conformation through which microtubules pass prior to being severed. Interacts with microtubules. Interacts with atl; may be involved in microtubule dynamics.

The protein resides in the membrane. It localises to the cytoplasm. The protein localises to the cytoskeleton. Its subcellular location is the microtubule organizing center. It is found in the centrosome. The protein resides in the chromosome. It localises to the lipid droplet. The enzyme catalyses n ATP + n H2O + a microtubule = n ADP + n phosphate + (n+1) alpha/beta tubulin heterodimers.. ATP-dependent microtubule severing protein. Stimulates microtubule minus-end depolymerization and poleward microtubule flux in the mitotic spindle. Regulates microtubule stability in the neuromuscular junction synapse. Involved in lipid metabolism by regulating the size and distribution of lipid droplets. Involved in axon regeneration by regulating microtubule severing. This is Spastin from Drosophila melanogaster (Fruit fly).